Reading from the N-terminus, the 212-residue chain is Small ribosomal subunit protein uS3 (212 aa).

Residues 38 to 106 enclose the KH type-2 domain; it reads IRKFVKKTLY…EFAIEVNEIR (69 aa).

Belongs to the universal ribosomal protein uS3 family. As to quaternary structure, part of the 30S ribosomal subunit. Forms a tight complex with proteins S10 and S14.

Functionally, binds the lower part of the 30S subunit head. Binds mRNA in the 70S ribosome, positioning it for translation. The polypeptide is Small ribosomal subunit protein uS3 (Nitratidesulfovibrio vulgaris (strain ATCC 29579 / DSM 644 / CCUG 34227 / NCIMB 8303 / VKM B-1760 / Hildenborough) (Desulfovibrio vulgaris)).